Consider the following 555-residue polypeptide: MAVDPPKADPKGVVAVDPTANCGSGLKSREDQGAKAGGCCSSRDQVCRCLRANLLVLLTVAAAVAGVVLGLGVSAAGGAEALGHARFTAFAFPGELLLRLLEMIILPLVVCSLIGGAASLDPSALGRLGAWALLFFLVTTLLSSALGVALALALKPGAAFAAINSSVVDSSVHRAPTKEVLDSFLELLRNMFPSNLVSASAAFRIFATSYVSKDINTSGIHPCGACPQRSNATMDQPHCEMKMNILGLVVFAIVFGVALRKLGPEGELLIRFFNSFNDATMVLVSWIMWYAPIGILFLVAGKIVEMKDIRQLFIGLGKYIVCCLLGHAIHGLLVLPLIYFLFTRKNPYRFLWGIVTPLATAFGTSSSSATLPLMMKCVEEKNGVAKHISRFILPIGATVNMDGAALFQCVAAVFIAQLNGMSLDFVKIITILVTATASSVGAAGIPAGGVLTLAIILEAISLPVKDISLILAVDWLVDRSCTVLNVEGDAFGAGLLQSYVDRTKMPSSEPELIQVKNDVSLKPLPLATEEGNPLLKQCREPSGDSSATCEKESVM.

Met1 is modified (N-acetylmethionine). At Met1–Ala52 the chain is on the cytoplasmic side. Residues Asn53 to Leu82 traverse the membrane as a helical segment. Topologically, residues Gly83–Glu95 are extracellular. The chain crosses the membrane as a helical span at residues Leu96–Ala117. Topologically, residues Ala118–Trp131 are cytoplasmic. A helical membrane pass occupies residues Ala132–Leu154. At Lys155–Cys239 the chain is on the extracellular side. N-linked (GlcNAc...) asparagine glycosylation is found at Asn164 and Asn231. The chain crosses the membrane as a helical span at residues Glu240–Leu262. Residues Gly263 to Arg271 lie on the Cytoplasmic side of the membrane. The chain crosses the membrane as a helical span at residues Phe272–Val299. Residues Ala300–Ile320 lie on the Extracellular side of the membrane. A helical membrane pass occupies residues Val321–Phe342. Over Thr343 to Pro347 the chain is Cytoplasmic. The segment at residues Tyr348 to Val378 is an intramembrane region (discontinuously helical). At Glu379–His387 the chain is on the cytoplasmic side. Residues Ile388 to Phe414 form a helical membrane-spanning segment. Na(+) is bound by residues Gly396, Thr398, and Asn400. The Extracellular portion of the chain corresponds to Ile415–Lys427. An intramembrane region (discontinuously helical) is located at residues Ile428 to Ser461. Residues Leu462–Asp474 are Extracellular-facing. A helical membrane pass occupies residues Trp475–Leu496. Residues Asn485 and Asp489 each coordinate Na(+). At Gln497–Met555 the chain is on the cytoplasmic side. A phosphoserine mark is found at Ser507, Ser508, Ser520, Ser545, and Ser553. The segment at Leu534–Met555 is disordered.

The protein belongs to the dicarboxylate/amino acid:cation symporter (DAACS) (TC 2.A.23) family. As to quaternary structure, homotrimer.

It is found in the cell membrane. The protein localises to the melanosome. It carries out the reaction L-glutamine(out) + L-serine(in) + Na(+)(out) = L-glutamine(in) + L-serine(out) + Na(+)(in). It catalyses the reaction L-glutamine(in) + L-serine(out) + Na(+)(out) = L-glutamine(out) + L-serine(in) + Na(+)(in). The catalysed reaction is L-threonine(in) + L-glutamine(out) + Na(+)(out) = L-threonine(out) + L-glutamine(in) + Na(+)(in). The enzyme catalyses L-threonine(out) + L-glutamine(in) + Na(+)(out) = L-threonine(in) + L-glutamine(out) + Na(+)(in). It carries out the reaction L-asparagine(in) + L-glutamine(out) + Na(+)(out) = L-asparagine(out) + L-glutamine(in) + Na(+)(in). It catalyses the reaction L-asparagine(out) + L-glutamine(in) + Na(+)(out) = L-asparagine(in) + L-glutamine(out) + Na(+)(in). The catalysed reaction is L-glutamine(in) + L-alanine(out) + Na(+)(out) = L-glutamine(out) + L-alanine(in) + Na(+)(in). The enzyme catalyses L-valine(out) + L-glutamine(in) + Na(+)(out) = L-valine(in) + L-glutamine(out) + Na(+)(in). It carries out the reaction L-glutamine(in) + L-methionine(out) + Na(+)(out) = L-glutamine(out) + L-methionine(in) + Na(+)(in). It catalyses the reaction L-glutamine(in) + L-glutamate(out) + Na(+)(out) + H(+)(out) = L-glutamine(out) + L-glutamate(in) + Na(+)(in) + H(+)(in). The catalysed reaction is D-serine(in) + L-glutamine(out) + Na(+)(out) = D-serine(out) + L-glutamine(in) + Na(+)(in). The enzyme catalyses D-serine(in) + L-alanine(out) + Na(+)(out) = D-serine(out) + L-alanine(in) + Na(+)(in). It carries out the reaction nitrate(in) = nitrate(out). It catalyses the reaction iodide(out) = iodide(in). The catalysed reaction is thiocyanate(in) = thiocyanate(out). Its activity is regulated as follows. Down-regulated at acidic pH. In terms of biological role, sodium-coupled antiporter of neutral amino acids. In a tri-substrate transport cycle, exchanges neutral amino acids between the extracellular and intracellular compartments, coupled to the inward cotransport of at least one sodium ion. The preferred substrate is the essential amino acid L-glutamine, a precursor for biosynthesis of proteins, nucleotides and amine sugars as well as an alternative fuel for mitochondrial oxidative phosphorylation. Exchanges L-glutamine with other neutral amino acids such as L-serine, L-threonine and L-asparagine in a bidirectional way. Provides L-glutamine to proliferating stem and activated cells driving the metabolic switch toward cell differentiation. The transport cycle is usually pH-independent, with the exception of L-glutamate. Transports extracellular L-glutamate coupled to the cotransport of one proton and one sodium ion in exchange for intracellular L-glutamine counter-ion. May provide for L-glutamate uptake in glial cells regulating glutamine/glutamate cycle in the nervous system. Can transport D-amino acids. Mediates D-serine release from the retinal glia potentially affecting NMDA receptor function in retinal neurons. Displays sodium- and amino acid-dependent but uncoupled channel-like anion conductance with a preference SCN(-) &gt;&gt; NO3(-) &gt; I(-) &gt; Cl(-). Through binding of the fusogenic protein syncytin-1/ERVW-1 may mediate trophoblasts syncytialization, the spontaneous fusion of their plasma membranes, an essential process in placental development. This chain is Neutral amino acid transporter B(0) (Slc1a5), found in Rattus norvegicus (Rat).